The sequence spans 321 residues: MSIENSKEAALTAELSLAGAFFYTPECPDIEHLRSLSVANRWLDTDLPISDDLKDVAKLTPAEREFYRFLFAFLSAADDLVNLNLGDLSALFTQKDILHYYIEQESIEVTHSRVYSAIQLMLFGNDAAARARYVASIIGDAAIGRKVAWLQAKVRECGSVAEKYILMILIEGLFFASSFASIAYLRTHNLFVVTCQSNDLISRDEAIHTRASCCIYNNYLGGFEKPEPKRIYELFSEAVNIECEFLLSHAPQYSHLLDIGAIISYVRYSADRLLGEIGLSPLFNAPKPSPSFPLAFMTVEKHTNFFERRSTAYSGTLINDL.

Fe cation-binding residues include D78, E108, and H111. Y115 is an active-site residue. Residues 165 to 185 form a helical membrane-spanning segment; sequence ILMILIEGLFFASSFASIAYL. Residues E171, E205, and H208 each coordinate Fe cation.

The protein belongs to the ribonucleoside diphosphate reductase small chain family. In terms of assembly, heterotetramer composed of a homodimer of the large subunit (R1) and a homodimer of the small subunit (R2). Larger multisubunit protein complex are also active, composed of (R1)n(R2)n. The cofactor is Fe cation.

The protein localises to the host membrane. It carries out the reaction a 2'-deoxyribonucleoside 5'-diphosphate + [thioredoxin]-disulfide + H2O = a ribonucleoside 5'-diphosphate + [thioredoxin]-dithiol. In terms of biological role, ribonucleoside-diphosphate reductase holoenzyme provides the precursors necessary for viral DNA synthesis. Allows virus growth in non-dividing cells, as well as reactivation from latency in infected hosts. Catalyzes the biosynthesis of deoxyribonucleotides from the corresponding ribonucleotides. The protein is Ribonucleoside-diphosphate reductase small subunit of Equus caballus (Horse).